The primary structure comprises 131 residues: Small nuclear ribonucleoprotein SmD3b (131 aa).

The Sm domain maps to 7-79; sequence IPVKLLHEAS…VRFMVIPDIL (73 aa). Positions 96–131 are disordered; the sequence is SSSLGVGRGRGAMRGKPAAGPGRGTGGRGAVPPVRR.

Belongs to the snRNP core protein family. As to expression, expressed in young seedlings, roots, leaves, flowers and immature siliques.

It localises to the cytoplasm. The protein localises to the cytosol. The protein resides in the nucleus. Core component of the spliceosomal U1, U2, U4 and U5 small nuclear ribonucleoproteins (snRNPs), the building blocks of the spliceosome. May play a major role in the splicing of cellular pre-mRNAs. Required for normal plant development. The protein is Small nuclear ribonucleoprotein SmD3b of Arabidopsis thaliana (Mouse-ear cress).